The primary structure comprises 159 residues: UPF0201 protein MK0399 (159 aa).

The protein belongs to the UPF0201 family.

The protein is UPF0201 protein MK0399 of Methanopyrus kandleri (strain AV19 / DSM 6324 / JCM 9639 / NBRC 100938).